The primary structure comprises 379 residues: Succinyl-diaminopimelate desuccinylase (379 aa).

H70 lines the Zn(2+) pocket. D72 is an active-site residue. Residue D103 coordinates Zn(2+). The active-site Proton acceptor is the E137. Positions 138, 166, and 352 each coordinate Zn(2+).

Belongs to the peptidase M20A family. DapE subfamily. As to quaternary structure, homodimer. It depends on Zn(2+) as a cofactor. Requires Co(2+) as cofactor.

The enzyme catalyses N-succinyl-(2S,6S)-2,6-diaminopimelate + H2O = (2S,6S)-2,6-diaminopimelate + succinate. It functions in the pathway amino-acid biosynthesis; L-lysine biosynthesis via DAP pathway; LL-2,6-diaminopimelate from (S)-tetrahydrodipicolinate (succinylase route): step 3/3. Catalyzes the hydrolysis of N-succinyl-L,L-diaminopimelic acid (SDAP), forming succinate and LL-2,6-diaminopimelate (DAP), an intermediate involved in the bacterial biosynthesis of lysine and meso-diaminopimelic acid, an essential component of bacterial cell walls. The chain is Succinyl-diaminopimelate desuccinylase from Burkholderia vietnamiensis (strain G4 / LMG 22486) (Burkholderia cepacia (strain R1808)).